Consider the following 535-residue polypeptide: Large neutral amino acids transporter small subunit 2 (535 aa).

Residues 1–17 are compositionally biased toward basic and acidic residues; that stretch reads MEEGARHRNNTEKKHPG. The tract at residues 1-30 is disordered; sequence MEEGARHRNNTEKKHPGGGESDASPEAGSG. Residues 1 to 44 are Cytoplasmic-facing; the sequence is MEEGARHRNNTEKKHPGGGESDASPEAGSGGGGVALKKEIGLVS. Ser29 carries the phosphoserine modification. The helical transmembrane segment at 45 to 65 threads the bilayer; it reads ACGIIVGNIIGSGIFVSPKGV. An L-leucine-binding site is contributed by Ile53. The Extracellular segment spans residues 66–73; sequence LENAGSVG. A helical transmembrane segment spans residues 74-95; sequence LALIVWIVTGFITVVGALCYAE. Residues 96–116 lie on the Cytoplasmic side of the membrane; it reads LGVTIPKSGGDYSYVKDIFGG. A helical transmembrane segment spans residues 117 to 149; the sequence is LAGFLRLWIAVLVIYPTNQAVIALTFSNYVLQP. Residue Asn134 coordinates L-tryptophan. Topologically, residues 150–157 are extracellular; the sequence is LFPTCFPP. A helical membrane pass occupies residues 158–178; it reads ESGLRLLAAICLLLLTWVNCS. Topologically, residues 179–181 are cytoplasmic; that stretch reads SVR. Residues 182-210 traverse the membrane as a helical segment; sequence WATRVQDIFTAGKLLALALIIIMGIVQIC. Over 211–230 the chain is Extracellular; it reads KGEYFWLEPKNAFENFQEPD. The chain crosses the membrane as a helical span at residues 231–252; the sequence is IGLVALAFLQGSFAYGGWNFLN. Gly246 is an L-leucine binding site. Topologically, residues 253–265 are cytoplasmic; it reads YVTEELVDPYKNL. Residues 266–287 form a helical membrane-spanning segment; that stretch reads PRAIFISIPLVTFVYVFANVAY. At 288–312 the chain is on the extracellular side; that stretch reads VTAMSPQELLASNAVAVTFGEKLLG. Residues 313-338 form a helical membrane-spanning segment; it reads VMAWIMPISVALSTFGGVNGSLFTSS. The Cytoplasmic portion of the chain corresponds to 339 to 364; the sequence is RLFFAGAREGHLPSVLAMIHVKRCTP. A helical transmembrane segment spans residues 365-382; sequence IPALLFTCISTLLMLVTS. The Extracellular segment spans residues 383 to 386; it reads DMYT. A helical membrane pass occupies residues 387–408; that stretch reads LINYVGFINYLFYGVTVAGQIV. Asn395 contributes to the L-tryptophan binding site. The Cytoplasmic segment spans residues 409 to 423; it reads LRWKKPDIPRPIKIN. 2 helical membrane passes run 424–446 and 447–466; these read LLFP…WSEP and VVCG…YFLG. At 467–535 the chain is on the cytoplasmic side; it reads VYWQHKPKCF…DKDVAGQPQP (69 aa). The tract at residues 502–535 is disordered; that stretch reads SGTEEANEDMEEQQQPMYQPTPTKDKDVAGQPQP. The span at 514–523 shows a compositional bias: polar residues; sequence QQQPMYQPTP.

This sequence belongs to the amino acid-polyamine-organocation (APC) superfamily. L-type amino acid transporter (LAT) (TC 2.A.3.8) family. Disulfide-linked heterodimer composed of the catalytic light chain subunit SLC7A8 and the heavy chain subunit SLC3A2. SLC3A2 acts as chaperones for correct plasma membrane trafficking and stabilization of SLC7A8 and modulates the substrate affinity and specificity of SLC7A8. ICAM-1 associates with the heterodimer SLC3A2/SLC7A8; this interaction regulates SLC7A8 activity. In terms of tissue distribution, strongest expression is observed in kidney and moderate expression in placenta and brain, followed by liver, prostate, testis, ovary, lymph node, thymus, spleen, skeletal muscle and heart. Also expressed in fetal liver as well as in the retinal pigment epithelial cell line ARPE-19 and the intestinal epithelial cell line Caco-2.

It is found in the cell membrane. It localises to the basolateral cell membrane. The catalysed reaction is L-histidine(in) + L-phenylalanine(out) = L-histidine(out) + L-phenylalanine(in). It carries out the reaction L-tryptophan(in) + L-phenylalanine(out) = L-tryptophan(out) + L-phenylalanine(in). It catalyses the reaction L-isoleucine(in) + L-phenylalanine(out) = L-isoleucine(out) + L-phenylalanine(in). The enzyme catalyses L-valine(in) + L-phenylalanine(out) = L-valine(out) + L-phenylalanine(in). The catalysed reaction is L-leucine(in) + L-phenylalanine(out) = L-leucine(out) + L-phenylalanine(in). It carries out the reaction L-glutamine(in) + L-phenylalanine(out) = L-glutamine(out) + L-phenylalanine(in). It catalyses the reaction L-cysteine(in) + L-phenylalanine(out) = L-cysteine(out) + L-phenylalanine(in). The enzyme catalyses L-phenylalanine(out) + L-methionine(in) = L-phenylalanine(in) + L-methionine(out). The catalysed reaction is L-leucine(out) + L-methionine(in) = L-leucine(in) + L-methionine(out). It carries out the reaction L-cysteine(out) + L-methionine(in) = L-cysteine(in) + L-methionine(out). It catalyses the reaction S-methylmercury-L-cysteine(out) + L-methionine(in) = S-methylmercury-L-cysteine(in) + L-methionine(out). The enzyme catalyses S-methylmercury-L-cysteine(in) + L-leucine(out) = S-methylmercury-L-cysteine(out) + L-leucine(in). The catalysed reaction is S-methylmercury-L-cysteine(in) + L-phenylalanine(out) = S-methylmercury-L-cysteine(out) + L-phenylalanine(in). It carries out the reaction L-phenylalanine(out) + L-serine(in) = L-phenylalanine(in) + L-serine(out). It catalyses the reaction L-phenylalanine(out) + glycine(in) = L-phenylalanine(in) + glycine(out). The enzyme catalyses L-phenylalanine(out) + L-alanine(in) = L-phenylalanine(in) + L-alanine(out). The catalysed reaction is 3,3'-diiodo-L-thyronine(out) = 3,3'-diiodo-L-thyronine(in). It carries out the reaction 3,3',5-triiodo-L-thyronine(out) = 3,3',5-triiodo-L-thyronine(in). It catalyses the reaction L-dopa(out) + L-phenylalanine(in) = L-dopa(in) + L-phenylalanine(out). Its activity is regulated as follows. Inhibited by the L-type inhibitor 2-Aminobicyclo-(2,2,1)-heptane-2-carboxylic acid (BCH). Functionally, associates with SLC3A2 to form a functional heterodimeric complex that translocates small and large neutral amino acids with broad specificity and a stoichiometry of 1:1. Functions as amino acid antiporter mediating the influx of extracellular essential amino acids mainly in exchange with the efflux of highly concentrated intracellular amino acids. Has relatively symmetrical selectivities but strongly asymmetrical substrate affinities at both the intracellular and extracellular sides of the transporter. This asymmetry allows SLC7A8 to regulate intracellular amino acid pools (mM concentrations) by exchange with external amino acids (uM concentration range), equilibrating the relative concentrations of different amino acids across the plasma membrane instead of mediating their net uptake. May play an essential role in the reabsorption of neutral amino acids from the epithelial cells to the bloodstream in the kidney. Involved in the uptake of methylmercury (MeHg) when administered as the L-cysteine or D,L-homocysteine complexes, and hence plays a role in metal ion homeostasis and toxicity. Involved in the cellular activity of small molecular weight nitrosothiols, via the stereoselective transport of L-nitrosocysteine (L-CNSO) across the transmembrane. Imports the thyroid hormone diiodothyronine (T2) and to a smaller extent triiodothyronine (T3) but not rT 3 or thyroxine (T4). Mediates the uptake of L-DOPA. May participate in auditory function. The chain is Large neutral amino acids transporter small subunit 2 from Homo sapiens (Human).